A 315-amino-acid polypeptide reads, in one-letter code: Olfactory receptor 5A1 (315 aa).

At 1 to 28 the chain is on the extracellular side; sequence MSITKAWNSSSVTMFILLGFTDHPELQA. The N-linked (GlcNAc...) asparagine glycan is linked to Asn8. The helical transmembrane segment at 29-52 threads the bilayer; it reads LLFVTFLGIYLTTLAWNLALIFLI. The Cytoplasmic segment spans residues 53–60; sequence RGDTHLHT. A helical transmembrane segment spans residues 61–82; it reads PMYFFLSNLSFIDICYSSAVAP. Over 83-103 the chain is Extracellular; that stretch reads NMLTDFFWEQKTISFVGCAAQ. A disulfide bridge connects residues Cys100 and Cys192. Residues 104–123 traverse the membrane as a helical segment; it reads FFFFVGMGLSECLLLTAMAY. Topologically, residues 124–142 are cytoplasmic; that stretch reads DRYAAISSPLLYPTIMTQG. The chain crosses the membrane as a helical span at residues 143–161; the sequence is LCTRMVVGAYVGGFLSSLI. Over 162–198 the chain is Extracellular; it reads QASSIFRLHFCGPNIINHFFCDLPPVLALSCSDTFLS. A helical transmembrane segment spans residues 199-222; the sequence is QVVNFLVVVTVGGTSFLQLLISYG. At 223 to 239 the chain is on the cytoplasmic side; sequence YIVSAVLKIPSAEGRWK. Residues 240–262 traverse the membrane as a helical segment; sequence ACNTCASHLMVVTLLFGTALFVY. At 263 to 275 the chain is on the extracellular side; sequence LRPSSSYLLGRDK. Residues 276–295 form a helical membrane-spanning segment; the sequence is VVSVFYSLVIPMLNPLIYSL. Topologically, residues 296 to 315 are cytoplasmic; it reads RNKEIKDALWKVLERKKVFS.

It belongs to the G-protein coupled receptor 1 family.

The protein localises to the cell membrane. In terms of biological role, odorant receptor. This Homo sapiens (Human) protein is Olfactory receptor 5A1 (OR5A1).